Consider the following 186-residue polypeptide: Potassium-transporting ATPase KdpC subunit 1 (186 aa).

The chain crosses the membrane as a helical span at residues 10-30; sequence LTIITMVLCGFLFPLAITLIG.

This sequence belongs to the KdpC family. As to quaternary structure, the system is composed of three essential subunits: KdpA, KdpB and KdpC.

It is found in the cell membrane. In terms of biological role, part of the high-affinity ATP-driven potassium transport (or Kdp) system, which catalyzes the hydrolysis of ATP coupled with the electrogenic transport of potassium into the cytoplasm. This subunit acts as a catalytic chaperone that increases the ATP-binding affinity of the ATP-hydrolyzing subunit KdpB by the formation of a transient KdpB/KdpC/ATP ternary complex. The protein is Potassium-transporting ATPase KdpC subunit 1 of Staphylococcus aureus (strain Mu50 / ATCC 700699).